Consider the following 118-residue polypeptide: Phosphoribosyl-AMP cyclohydrolase (118 aa).

Asp-87 contacts Mg(2+). Cys-88 contributes to the Zn(2+) binding site. Residues Asp-89 and Asp-91 each contribute to the Mg(2+) site. Zn(2+) contacts are provided by Cys-104 and Cys-111.

It belongs to the PRA-CH family. In terms of assembly, homodimer. The cofactor is Mg(2+). It depends on Zn(2+) as a cofactor.

The protein localises to the cytoplasm. It carries out the reaction 1-(5-phospho-beta-D-ribosyl)-5'-AMP + H2O = 1-(5-phospho-beta-D-ribosyl)-5-[(5-phospho-beta-D-ribosylamino)methylideneamino]imidazole-4-carboxamide. It participates in amino-acid biosynthesis; L-histidine biosynthesis; L-histidine from 5-phospho-alpha-D-ribose 1-diphosphate: step 3/9. In terms of biological role, catalyzes the hydrolysis of the adenine ring of phosphoribosyl-AMP. The sequence is that of Phosphoribosyl-AMP cyclohydrolase from Corynebacterium glutamicum (strain ATCC 13032 / DSM 20300 / JCM 1318 / BCRC 11384 / CCUG 27702 / LMG 3730 / NBRC 12168 / NCIMB 10025 / NRRL B-2784 / 534).